A 664-amino-acid polypeptide reads, in one-letter code: Fructose-1,6-bisphosphatase class 3 (664 aa).

It belongs to the FBPase class 3 family. It depends on Mn(2+) as a cofactor.

The catalysed reaction is beta-D-fructose 1,6-bisphosphate + H2O = beta-D-fructose 6-phosphate + phosphate. It functions in the pathway carbohydrate biosynthesis; gluconeogenesis. The sequence is that of Fructose-1,6-bisphosphatase class 3 from Bacteroides thetaiotaomicron (strain ATCC 29148 / DSM 2079 / JCM 5827 / CCUG 10774 / NCTC 10582 / VPI-5482 / E50).